The following is a 267-amino-acid chain: Putative B3 domain-containing protein LOC_Os07g12820 (267 aa).

Residues P4–E99 constitute a DNA-binding region (TF-B3).

Its subcellular location is the nucleus. The chain is Putative B3 domain-containing protein LOC_Os07g12820 from Oryza sativa subsp. japonica (Rice).